We begin with the raw amino-acid sequence, 467 residues long: Argininosuccinate lyase (467 aa).

This sequence belongs to the lyase 1 family. Argininosuccinate lyase subfamily.

The protein resides in the cytoplasm. The enzyme catalyses 2-(N(omega)-L-arginino)succinate = fumarate + L-arginine. Its pathway is amino-acid biosynthesis; L-arginine biosynthesis; L-arginine from L-ornithine and carbamoyl phosphate: step 3/3. The polypeptide is Argininosuccinate lyase (Sinorhizobium fredii (strain NBRC 101917 / NGR234)).